Consider the following 430-residue polypeptide: Replication factor C large subunit (430 aa).

ATP is bound at residue Gly-75–Thr-82.

It belongs to the activator 1 small subunits family. RfcL subfamily. In terms of assembly, heteromultimer composed of small subunits (RfcS) and large subunits (RfcL).

In terms of biological role, part of the RFC clamp loader complex which loads the PCNA sliding clamp onto DNA. The sequence is that of Replication factor C large subunit from Nanoarchaeum equitans (strain Kin4-M).